Consider the following 423-residue polypeptide: Protein phosphatase 2C 77 (423 aa).

Residues 74–95 form a disordered region; that stretch reads GDEINGSDEFDPRSMNQSEKKV. One can recognise a PPM-type phosphatase domain in the interval 112–411; it reads LYGVTSICGR…DNISVVVVDL (300 aa). Asp-165, Asp-251, and Ser-252 together coordinate Mg(2+). Cys-257 and Cys-331 are oxidised to a cystine. Residues Asp-337 and Asp-402 each contribute to the Mg(2+) site.

Belongs to the PP2C family. Interacts with SPK1, CIPK15/PKS3, GPX3, SCAR1, SCAR2, SCAR3 and SCARL. Also interacts with CIPK24/SOS2. Binds to the fibrillin precursor protein. Interacts with ABA-bounded PYR1, PYL1, PYL2, PYL3, PYL4, PYL5, PYL6, PYL8 and PYL9, and with free PYL2, PYL3 and PYL4. Interacts with and represses GHR1, and, to a lesser extent, SRK2E/OST1. Requires Mg(2+) as cofactor. Mn(2+) is required as a cofactor.

The catalysed reaction is O-phospho-L-seryl-[protein] + H2O = L-seryl-[protein] + phosphate. It catalyses the reaction O-phospho-L-threonyl-[protein] + H2O = L-threonyl-[protein] + phosphate. Phosphatase activity repressed by oxidized ATGPX3, free fatty acids (e.g. arachidonic acid (20:4) and Linolenic acid (18:3)) and by H(2)O(2). Repressed by PYR/PYL/RCAR ABA receptors in an ABA-dependent manner. Functionally, repressor of the abscisic acid (ABA) signaling pathway that regulates numerous ABA responses, such as stomatal closure, osmotic water permeability of the plasma membrane (Pos), high light stress, response to glucose, seed germination and inhibition of vegetative growth. During the stomatal closure regulation, modulates the inward calcium-channel permeability as well as H(2)O(2) and oxidative burst in response to ABA and dehydration. Represses GHR1 and, to some extent, SRK2E/OST1, kinases involved in the regulation of SLAC1-dependent stomatal closure. Controls negatively fibrillin that is involved in mediating ABA-induced photoprotection. May be implicated in ABA content regulation. Involved in acquired thermotolerance of root growth and seedling survival. Required for the Erwinia amylovora harpin-induced (HrpN) drought tolerance. Involved in the hydrotropic response. The chain is Protein phosphatase 2C 77 from Arabidopsis thaliana (Mouse-ear cress).